A 528-amino-acid chain; its full sequence is U3 small nucleolar RNA-associated protein 15 homolog (528 aa).

Ala2 carries the post-translational modification N-acetylalanine. 7 WD repeats span residues 36–75, 78–117, 120–159, 162–202, 204–242, 246–285, and 287–326; these read KEFG…PVKT, RFKD…PLRQ, GHTK…EILT, EHSD…NVLC, EHGQ…QLLV, NHHK…VVHS, and DYAA…KKES. Lys249 participates in a covalent cross-link: Glycyl lysine isopeptide (Lys-Gly) (interchain with G-Cter in SUMO2). The tract at residues 508-528 is disordered; sequence AELPEEKTESPRQPSDTDKNS. Residues 511-528 show a composition bias toward basic and acidic residues; that stretch reads PEEKTESPRQPSDTDKNS.

In terms of assembly, part of the small subunit (SSU) processome, composed of more than 70 proteins and the RNA chaperone small nucleolar RNA (snoRNA) U3. May be a component of the proposed t-UTP subcomplex of the ribosomal small subunit (SSU) processome containing at least UTP4, WDR43, HEATR1, UTP15, WDR75. Interacts directly with UTP4 and WDR43.

Its subcellular location is the nucleus. It is found in the nucleolus. Functionally, ribosome biogenesis factor. Involved in nucleolar processing of pre-18S ribosomal RNA. Required for optimal pre-ribosomal RNA transcription by RNA polymerase I. Part of the small subunit (SSU) processome, first precursor of the small eukaryotic ribosomal subunit. During the assembly of the SSU processome in the nucleolus, many ribosome biogenesis factors, an RNA chaperone and ribosomal proteins associate with the nascent pre-rRNA and work in concert to generate RNA folding, modifications, rearrangements and cleavage as well as targeted degradation of pre-ribosomal RNA by the RNA exosome. The sequence is that of U3 small nucleolar RNA-associated protein 15 homolog from Rattus norvegicus (Rat).